Reading from the N-terminus, the 310-residue chain is Zinc finger protein 42 homolog (310 aa).

Basic residues predominate over residues M1–K15. The interval M1–D35 is disordered. 4 C2H2-type zinc fingers span residues I188–H212, H217–H239, F245–H269, and F275–H299. Residues K231 and K233 each participate in a glycyl lysine isopeptide (Lys-Gly) (interchain with G-Cter in ubiquitin) cross-link.

It belongs to the krueppel C2H2-type zinc-finger protein family. Polyubiquitinated by RNF12, leading to proteasomal degradation. As to expression, expressed in kidney, epidermal keratinocytes, prostate epithelial cells, bronchial and small airway lung epithelial cells (at protein level). Expressed in malignant kidney and several carcinoma cell lines (at protein level). Expressed in embryonic stem cells, kidney, epidermal keratinocytes, prostate epithelial cells, bronchial and small airway lung epithelial cells. Expressed in embryonal carcinomas, seminomas, malignant kidney and several carcinoma cell lines.

Its subcellular location is the nucleus. Its function is as follows. Involved in the reprogramming of X-chromosome inactivation during the acquisition of pluripotency. Required for efficient elongation of TSIX, a non-coding RNA antisense to XIST. Binds DXPas34 enhancer within the TSIX promoter. Involved in ES cell self-renewal. The protein is Zinc finger protein 42 homolog (ZFP42) of Homo sapiens (Human).